The chain runs to 142 residues: NCT transcriptional regulatory complex subunit B (142 aa).

The protein belongs to the NC2 beta/DR1 family. Forms the NCT transcriptional regulatory complex with nctA and mot1.

The protein localises to the nucleus. Its function is as follows. Part of the NCT transcriptional regulatory complex that acts as a key regulator of ergosterol biosynthesis and the azole exporter cdr1B. The NCT complex binds the promoters of genes linked to azole susceptibility, and especially represses the expression of cdr1B transporter. This Aspergillus fumigatus (strain CBS 144.89 / FGSC A1163 / CEA10) (Neosartorya fumigata) protein is NCT transcriptional regulatory complex subunit B.